The following is a 298-amino-acid chain: 1,2-dihydroxynaphthalene dioxygenase (298 aa).

VOC domains are found at residues Glu-6–Gly-121 and Gly-146–Gly-267. His-149 is a binding site for Fe cation. Substrate contacts are provided by residues His-149, Gln-196–His-197, His-212, and Tyr-253. His-212 is a Fe cation binding site. Residue Glu-263 participates in Fe cation binding.

Belongs to the extradiol ring-cleavage dioxygenase family. As to quaternary structure, homooctamer. Fe(2+) is required as a cofactor.

The enzyme catalyses naphthalene-1,2-diol + O2 = 2-hydroxychromene-2-carboxylate + H(+). Its pathway is aromatic compound metabolism; naphthalene degradation. Its function is as follows. Involved in the naphthalene and naphthalenesulfonate catabolic pathway. Catalyzes the meta-cleavage of 1,2-dihydroxynaphthalene (1,2-DHN) to yield 2-hydroxychromene-2-carboxylic acid. Can also cleave 1,2,5-trihydroxynaphthalene (1,2,5-THN), 1,2,6-trihydroxynaphthalene (1,2,6-THN), 1,2,7-trihydroxynaphthalene (1,2,7-THN), 2,3-dihydroxybiphenyl, 3,4-dihydroxybiphenyl, catechol, 3-methylcatechol and 4-methylcatechol. This Sphingobium xenophagum protein is 1,2-dihydroxynaphthalene dioxygenase (nsaC).